The following is a 352-amino-acid chain: MNELQLLGPRAYGDALGTAVLKAIAEDFQVDEVLDIPFSGDGEHLWIWVEKRGLNTEEAARRIAKAAGVPLRTVSYAGLKDRQALTRQWFSVQLPGKADPDLSAAENDTLKILKTTRHKRKLQRGAHSANGFTLRLTQFNGDKAAIDERLQLIAKQGIPNYFGAQRFGHDGGNVVDARSWAARKALPEQRNVRSRLLSTARSFLFNQVLAARVADGTWQRAQVGDLLAFTDSRSFFPAGEAECSDPRLAILDLHPTGPQWGEGDSPAAGVVHDLEQGIAAREADLRDWLINAGMSHERRILRLPIGGLTWHYPEPDILQLEFVLPAGCFATVLVRELVDLVPVGQTDSPCVF.

D81 functions as the Nucleophile in the catalytic mechanism. A TRUD domain is found at 157-303 (GIPNYFGAQR…MSHERRILRL (147 aa)).

This sequence belongs to the pseudouridine synthase TruD family.

The catalysed reaction is uridine(13) in tRNA = pseudouridine(13) in tRNA. In terms of biological role, responsible for synthesis of pseudouridine from uracil-13 in transfer RNAs. The chain is tRNA pseudouridine synthase D from Pseudomonas fluorescens (strain Pf0-1).